A 95-amino-acid polypeptide reads, in one-letter code: 6 kDa early secretory antigenic target homolog (95 aa).

This sequence belongs to the WXG100 family. ESAT-6 subfamily. As to quaternary structure, forms a tight 1:1 complex with EsxB.

The protein resides in the secreted. Functionally, a secreted protein that might play a role in virulence. This is 6 kDa early secretory antigenic target homolog (esxA) from Mycobacterium leprae (strain TN).